The sequence spans 95 residues: MNLKPLADRVIVKPAPAEEKTKGGLIIPDTGKEKPQYGEVVAVGTGKVADSGQLLEMQIKVGQKVLYGKYSGTEVSVEGEDYLIMRESDIFAILD.

Belongs to the GroES chaperonin family. Heptamer of 7 subunits arranged in a ring. Interacts with the chaperonin GroEL.

It is found in the cytoplasm. Together with the chaperonin GroEL, plays an essential role in assisting protein folding. The GroEL-GroES system forms a nano-cage that allows encapsulation of the non-native substrate proteins and provides a physical environment optimized to promote and accelerate protein folding. GroES binds to the apical surface of the GroEL ring, thereby capping the opening of the GroEL channel. This chain is Co-chaperonin GroES, found in Chlorobium phaeobacteroides (strain DSM 266 / SMG 266 / 2430).